Reading from the N-terminus, the 251-residue chain is uncharacterized protein (251 aa).

This is an uncharacterized protein from Bacillus subtilis (strain 168).